Here is a 919-residue protein sequence, read N- to C-terminus: Isoleucine--tRNA ligase (919 aa).

A 'HIGH' region motif is present at residues 57-67 (PYANGNIHIGH). Glu-569 lines the L-isoleucyl-5'-AMP pocket. The 'KMSKS' region signature appears at 610-614 (KMSKS). Position 613 (Lys-613) interacts with ATP. 4 residues coordinate Zn(2+): Cys-896, Cys-899, Cys-911, and Cys-914.

The protein belongs to the class-I aminoacyl-tRNA synthetase family. IleS type 1 subfamily. Monomer. The cofactor is Zn(2+).

It localises to the cytoplasm. The enzyme catalyses tRNA(Ile) + L-isoleucine + ATP = L-isoleucyl-tRNA(Ile) + AMP + diphosphate. Its function is as follows. Catalyzes the attachment of isoleucine to tRNA(Ile). As IleRS can inadvertently accommodate and process structurally similar amino acids such as valine, to avoid such errors it has two additional distinct tRNA(Ile)-dependent editing activities. One activity is designated as 'pretransfer' editing and involves the hydrolysis of activated Val-AMP. The other activity is designated 'posttransfer' editing and involves deacylation of mischarged Val-tRNA(Ile). In Aliarcobacter butzleri (strain RM4018) (Arcobacter butzleri), this protein is Isoleucine--tRNA ligase.